The following is a 1230-amino-acid chain: MASASYHISNLLEKMTSSDKDFRFMATNDLMTELQKDSIKLDDDSERKVVKMILKLLEDKNGEVQNLAVKCLGPLVSKVKEYQVETIVDTLCTNMLSDKEQLRDISSIGLKTVIGELPPASSGSALAANVCKKITGRLTSAIAKQEDVSVQLEALDIMADMLSRQGGLLVNFHPSILTCLLPQLTSPRLAVRKRTIIALGHLVMSCGNIVFVDLIEHLLSELSKNDSMSTTRTYIQCIAAISRQAGHRIGEYLEKIIPLVVKFCNVDDDELREYCIQAFESFVRRCPKEVYPHVSTIINICLKYLTYDPNYNYDDEDEDENAMDADGGDDDDQGSDDEYSDDDDMSWKVRRAAAKCLDAVVSTRHEMLPEFYKTVSPALISRFKEREENVKADVFHAYLSLLKQTRPVQSWLCDPDAMEQGETPLTMLQSQVPNIVKALHKQMKEKSVKTRQCCFNMLTELVNVLPGALTQHIPVLVPGIIFSLNDKSSSSNLKIDALSCLYVILCNHSPQVFHPHVQALVPPVVACVGDPFYKITSEALLVTQQLVKVIRPLDQPSSFDATPYIKDLFTCTIKRLKAADIDQEVKERAISCMGQIICNLGDNLGPDLSNTLQIFLERLKNEITRLTTVKALTLIAGSPLKIDLRPVLGEGVPILASFLRKNQRALKLGTLSALDILIKNYSDSLTAAMIDAVLDELPPLISESDMHVSQMAISFLTTLAKVYPSSLSKISGSILNELIGLVRSPLLQGGALSAMLDFFQALVVTGTNNLGYMDLLRMLTGPVYSQSTALTHKQSYYSIAKCVAALTRACPKEGPAVVGQFIQDVKNSRSTDSIRLLALLSLGEVGHHIDLSGQLELKSVILEAFSSPSEEVKSAASYALGSISVGNLPEYLPFVLQEITSQPKRQYLLLHSLKEIISSASVVGLKPYVENIWALLLKHCECAEEGTRNVVAECLGKLTLIDPETLLPRLKGYLISGSSYARSSVVTAVKFTISDHPQPIDPLLKNCIGDFLKTLEDPDLNVRRVALVTFNSAAHNKPSLIRDLLDSVLPHLYNETKVRKELIREVEMGPFKHTVDDGLDIRKAAFECMYTLLDSCLDRLDIFEFLNHVEDGLKDHYDIKMLTFLMLVRLSTLCPSAVLQRLDRLVEPLRATCTTKVKANSVKQEFEKQDELKRSAMRAVAALLTIPEAEKSPLMSEFQSQISSNPELAAIFESIQKDSSSTNLESMDTS.

Ala2 bears the N-acetylalanine mark. HEAT repeat units lie at residues 2-39 (ASAS…KDSI), 44-81 (DSER…KVKE), 83-119 (QVET…ELPP), 131-165 (CKKI…LSRQ), 171-208 (NFHP…SCGN), 210-247 (VFVD…QAGH), 248-282 (RIGE…FESF), 289-366 (EVYP…TRHE), 370-407 (EFYK…QTRP), 424-467 (PLTM…VLPG), 471-510 (QHIP…NHSP), and 515-552 (PHVQ…VIRP). An N6-acetyllysine modification is found at Lys55. The interval 315–344 (DEDEDENAMDADGGDDDDQGSDDEYSDDDD) is disordered. Position 335 is a phosphoserine (Ser335). Residue Ser558 is modified to Phosphoserine. HEAT repeat units follow at residues 563-602 (PYIK…NLGD), 606-643 (PDLS…LKID), 646-683 (PVLG…NYSD), 688-725 (AMID…VYPS), 729-768 (KISG…TGTN), 770-808 (LGYM…ALTR), 809-845 (ACPK…LGEV), 852-889 (SGQL…GNLP), 890-927 (EYLP…GLKP), 928-960 (YVEN…KLTL), 961-998 (IDPE…DHPQ), 1002-1039 (PLLK…NKPS), 1043-1097 (DLLD…DSCL), 1099-1133 (RLDI…LSTL), and 1140-1189 (QRLD…IPEA). The residue at position 971 (Lys971) is an N6-acetyllysine.

It belongs to the CAND family. As to quaternary structure, interacts with TBP. Part of a complex that contains CUL1 and RBX1. Interacts with unneddylated cullins: interacts with CUL1, CUL2, CUL3, CUL4A, CUL4B and CUL5. Does not bind neddylated CUL1. Interaction with cullins is abolished in presence of COMMD1, which antagonizes with CAND1 for interacting with cullins. Interacts with ERCC6. Interacts with DCUN1D1, DCUN1D2, DCUN1D3, DCUN1D4 and DCUN1D5; these interactions are bridged by cullins and strongly inhibits the neddylation of cullins. As to expression, detected in heart, brain, spleen, liver, skeletal muscle, kidney and testis.

Its subcellular location is the cytoplasm. The protein localises to the nucleus. In terms of biological role, key assembly factor of SCF (SKP1-CUL1-F-box protein) E3 ubiquitin ligase complexes that promotes the exchange of the substrate-recognition F-box subunit in SCF complexes, thereby playing a key role in the cellular repertoire of SCF complexes. Acts as a F-box protein exchange factor. The exchange activity of CAND1 is coupled with cycles of neddylation conjugation: in the deneddylated state, cullin-binding CAND1 binds CUL1-RBX1, increasing dissociation of the SCF complex and promoting exchange of the F-box protein. Probably plays a similar role in other cullin-RING E3 ubiquitin ligase complexes. May indirectly enhance transcription from various types of promoters. In Rattus norvegicus (Rat), this protein is Cullin-associated NEDD8-dissociated protein 1 (Cand1).